The following is a 289-amino-acid chain: Serine/threonine-protein phosphatase Pgam5, mitochondrial (289 aa).

The helical transmembrane segment at 7 to 23 (FACGTGAGLAAYYLQRL) threads the bilayer.

Belongs to the phosphoglycerate mutase family. BPG-dependent PGAM subfamily. Interacts with Pk92B/ASK1.

It localises to the mitochondrion outer membrane. The enzyme catalyses O-phospho-L-seryl-[protein] + H2O = L-seryl-[protein] + phosphate. The catalysed reaction is O-phospho-L-threonyl-[protein] + H2O = L-threonyl-[protein] + phosphate. Functionally, displays phosphatase activity for serine/threonine residues, and dephosphorylates and activates Pk92B kinase. Has apparently no phosphoglycerate mutase activity. The sequence is that of Serine/threonine-protein phosphatase Pgam5, mitochondrial from Drosophila sechellia (Fruit fly).